The chain runs to 153 residues: Large ribosomal subunit protein uL15 (153 aa).

The disordered stretch occupies residues methionine 1–proline 47.

The protein belongs to the universal ribosomal protein uL15 family. In terms of assembly, part of the 50S ribosomal subunit.

Its function is as follows. Binds to the 23S rRNA. In Dehalococcoides mccartyi (strain ATCC BAA-2100 / JCM 16839 / KCTC 5957 / BAV1), this protein is Large ribosomal subunit protein uL15.